Here is a 134-residue protein sequence, read N- to C-terminus: UPF0412 protein YaaI (134 aa).

The signal sequence occupies residues 1–23; that stretch reads MKSVITISASLAISLMLCCTAQA.

It belongs to the UPF0412 family.

This Escherichia coli O127:H6 (strain E2348/69 / EPEC) protein is UPF0412 protein YaaI.